Here is a 301-residue protein sequence, read N- to C-terminus: Homoserine O-acetyltransferase (301 aa).

The Acyl-thioester intermediate role is filled by C142. Substrate-binding residues include K163 and S192. H235 acts as the Proton acceptor in catalysis. Residue E237 is part of the active site. Position 249 (R249) interacts with substrate.

It belongs to the MetA family.

The protein localises to the cytoplasm. It catalyses the reaction L-homoserine + acetyl-CoA = O-acetyl-L-homoserine + CoA. It functions in the pathway amino-acid biosynthesis; L-methionine biosynthesis via de novo pathway; O-acetyl-L-homoserine from L-homoserine: step 1/1. Its function is as follows. Transfers an acetyl group from acetyl-CoA to L-homoserine, forming acetyl-L-homoserine. The protein is Homoserine O-acetyltransferase of Bacillus cereus (strain AH187).